Reading from the N-terminus, the 1030-residue chain is Tricorn protease (1030 aa).

The six-bladed beta propeller stretch occupies residues Met-1 to Pro-270. Residues Arg-93–Arg-94 are binds the substrate's C-terminus. Residues Leu-286 to Ala-635 form a seven-bladed beta propeller region. The interval Asn-641–Gly-712 is C-1. The active-site Charge relay system is the His-706. The segment at Arg-721–Asp-816 is PDZ-like. Residues Arg-817–Lys-1022 are C-2. Residue Gly-877–Gly-879 coordinates substrate. The active-site Nucleophile is Ser-926. Gly-954–Ser-956 serves as a coordination point for substrate. Glu-984 (charge relay system) is an active-site residue.

This sequence belongs to the peptidase S41B family. Part of the tricorn proteolytic complex.

It localises to the cytoplasm. In terms of biological role, tricorn degrades oligopeptides in a sequential manner. The chain is Tricorn protease (tri) from Thermoplasma volcanium (strain ATCC 51530 / DSM 4299 / JCM 9571 / NBRC 15438 / GSS1).